Consider the following 263-residue polypeptide: uncharacterized protein (263 aa).

Its subcellular location is the mitochondrion. This is an uncharacterized protein from Schizosaccharomyces pombe (strain 972 / ATCC 24843) (Fission yeast).